The primary structure comprises 392 residues: MALRCFPIWVCPQTTHHRSPLMGLAEFDADKRRRFCLWECSSSASQRAVTAIEGEIPFSRELKKSSDELGLTQETQSLSFHRDLSMLPKPLTANSLYSSDGDDSKVRISFQGIPGAYSETAALKAFPNCETVPCEQFEAAFQAVELWLVDKAVLPIENSVGGSIHRNYDLLLRHRLHIVQEVHLPVNHCLLGVPGVKKEDIKCVLSHPQALDQCVNSLNNLGIQRISAKDTATAAQTVSSSGKIDVGAIASVRAANIYGLDILAENIQDDVNNVTRFLILAREPMIPRTDRPYKTSIVFSLEEGPGVLFKALAVFALRSINLSKIESRPQRRRPLRVVDGSNNGSAKYFDYLFYIDFEASMADTRAQHALGHLQEFASFIRILGCYPMDLVR.

Residues Met1–Ala48 constitute a chloroplast transit peptide. In terms of domain architecture, Prephenate dehydratase spans Arg107–Arg282. One can recognise an ACT domain in the interval Ser296–Pro387.

Expressed in roots, leaves, stems, flowers and siliques.

It is found in the plastid. It localises to the chloroplast stroma. The catalysed reaction is L-arogenate + H(+) = L-phenylalanine + CO2 + H2O. It carries out the reaction prephenate + H(+) = 3-phenylpyruvate + CO2 + H2O. The protein operates within amino-acid biosynthesis; L-phenylalanine biosynthesis; L-phenylalanine from L-arogenate: step 1/1. It functions in the pathway amino-acid biosynthesis; L-phenylalanine biosynthesis; phenylpyruvate from prephenate: step 1/1. Functionally, converts the prephenate produced from the shikimate-chorismate pathway into phenylalanine. Dehydratase that uses arogenate and prephenate as substrates. Utilzes more efficiently arogenate than prephenate. This is Arogenate dehydratase/prephenate dehydratase 1, chloroplastic from Arabidopsis thaliana (Mouse-ear cress).